A 1019-amino-acid polypeptide reads, in one-letter code: MVLASFLVSGLVLGILAQQMRPVQSRGVDLGLCDETRFECKCGDPGYVFNVPMKQCTYFYRWRPYCKPCDDLEAKDICPKYKRCQECKAGLDSCVTCPPNKYGTWCSGECQCKNGGICDQRTGACTCRDRYEGAHCEILKGCPLLPSDSQVQEVRNPPDNPQTIDYSCSPGFKLKGVARISCLPNGQWSSFPPKCIRECAKVSSPEHGKVNAPSGNMIEGATLRFSCDSPYYLIGQETLTCQGNGQWSGQIPQCKKLVFCPDLDPVNHAEHQVKIGVEQKYGQFPQGTEVTYTCSGNYFLMGFNTLKCNPDGSWSGSQPSCVKVADREVDCDSKAVDFLDDVGEPVRIHCPAGCSLTAGTVWGTAIYHELSSVCRAAIHAGKLPNSGGAVHVVNNGPYSDFLGSDLNGIKSEELKSLARSFRFDYVSSSTAGRSGCPDGWFEVEENCVYVTSKQRAWERAQGVCTNMAARLAVLDKDLIPSSLTETLRGKGLTTTWIGLHRLDAEKPFVWELMDRSNVVLNDNLTFWASGEPGNETNCVYLDIRDQLQPVWKTKSCFQPSSFACMMDLSDRNKAKCDDPGPLENGHATLHGQSIDGFYAGSSIRYSCEVLHYLSGTETVTCTTNGTWSAPKPRCIKVITCQNPPVPSYGSVEIKPPSRTNSISRVGSPFLRLPRLPLPLARAAKPPPKPRSSQPSTVDLASKVKLPEGHYRVGSRAIYTCESRYYELLGSQGRRCDSNGNWSGRPASCIPVCGRSDSPRSPFIWNGNSTEIGQWPWQAGISRWLADHNMWFLQCGGSLLNEKWIVTAAHCVTYSATAEIIDPSQFKIYLGKYYRDDSRDDDYVQVREALEIHVNPNYDPGNLNFDIALIQLKTPVTLTTRVQPICLPTDITTREHLKEGTLAVVTGWGLNENNTYSEMIQQAVLPVVAASTCEEGYKEADLPLTVTENMFCAGYKKGRYDACSGDSGGPLVFADDSRTERRWVLEGIVSWGSPSGCGKANQYGGFTKVNVFLSWIRQFI.

Residues 1–25 (MVLASFLVSGLVLGILAQQMRPVQS) form the signal peptide. An EGF-like domain is found at 102 to 137 (YGTWCSGECQCKNGGICDQRTGACTCRDRYEGAHCE). 16 disulfides stabilise this stretch: C110/C118, C112/C125, C127/C136, C142/C182, C168/C195, C199/C241, C227/C254, C260/C308, C294/C321, C331/C350, C354/C374, C464/C564, C538/C556, C576/C621, C607/C634, and C720/C748. Sushi domains follow at residues 140 to 197 (KGCP…KCIR), 198 to 256 (ECAK…QCKK), and 258 to 323 (VFCP…SCVK). The 97-residue stretch at 325 to 421 (ADREVDCDSK…EELKSLARSF (97 aa)) folds into the LCCL domain. In terms of domain architecture, C-type lectin spans 436 to 568 (CPDGWFEVEE…PSSFACMMDL (133 aa)). 2 N-linked (GlcNAc...) asparagine glycosylation sites follow: N523 and N534. 2 consecutive Sushi domains span residues 574 to 636 (AKCD…RCIK) and 689 to 750 (PRSS…SCIP). N624, N740, and N767 each carry an N-linked (GlcNAc...) asparagine glycan. One can recognise a Peptidase S1 domain in the interval 763–1019 (IWNGNSTEIG…VFLSWIRQFI (257 aa)). C794 and C810 are joined by a disulfide. Active-site charge relay system residues include H809 and D865. N-linked (GlcNAc...) asparagine glycosylation is present at N912. A disulfide bond links C932 and C951. D960 is a substrate binding site. A disulfide bridge connects residues C962 and C996. Catalysis depends on S966, which acts as the Charge relay system.

The protein belongs to the peptidase S1 family. In terms of assembly, heterodimer of a light chain and a heavy chain linked by a disulfide bond. Forms a covalent heterodimer with intracellular coagulation inhibitor 1/LICI-1. Forms a covalent heterodimer with intracellular coagulation inhibitor 2/LICI-2. N-glycosylated. Post-translationally, lipopolysaccharide (LPS) activates clotting factor C by inducing the proteolytic cleavage of the clotting factor C light chain into clotting factor C chains A and B. Clotting factor C chains heavy, A and B remain associated via interchain disulfide bonds. In terms of tissue distribution, expressed in hemocytes (at protein level).

It is found in the secreted. The catalysed reaction is Selective cleavage of 103-Arg-|-Ser-104 and 124-Ile-|-Ile-125 bonds in Limulus clotting factor B to form activated factor B. Cleavage of -Pro-Arg-|-Xaa- bonds in synthetic substrates.. Activated by Gram-negative bacterial lipopolysaccharides. Inhibited by intracellular coagulation inhibitor 1/LICI-1 and to a lesser extent by intracellular coagulation inhibitors 2/LICI-2 and 3/LICI-3. Inhibited by the small molecule diisopropyl fluorophosphate (DFP). In terms of biological role, this enzyme is closely associated with an endotoxin-sensitive hemolymph coagulation system which may play important roles in both hemostasis and host defense mechanisms. Its active form catalyzes the activation of clotting factor B. In Tachypleus tridentatus (Japanese horseshoe crab), this protein is Clotting factor C.